Reading from the N-terminus, the 380-residue chain is Putative T-box protein 40 (380 aa).

A DNA-binding region (T-box) is located at residues 11-192; the sequence is MAEEDRWLTQ…KNATFENRLD (182 aa). Residues 188-215 form a disordered region; it reads ENRLDGGNKRKNTNSREEPSSKRSKNET. Residues 189–215 are compositionally biased toward basic and acidic residues; the sequence is NRLDGGNKRKNTNSREEPSSKRSKNET.

Its subcellular location is the nucleus. The chain is Putative T-box protein 40 (tbx-40) from Caenorhabditis elegans.